We begin with the raw amino-acid sequence, 76 residues long: Small ribosomal subunit protein bS18 (76 aa).

It belongs to the bacterial ribosomal protein bS18 family. In terms of assembly, part of the 30S ribosomal subunit. Forms a tight heterodimer with protein bS6.

Its function is as follows. Binds as a heterodimer with protein bS6 to the central domain of the 16S rRNA, where it helps stabilize the platform of the 30S subunit. This chain is Small ribosomal subunit protein bS18, found in Petrotoga mobilis (strain DSM 10674 / SJ95).